A 158-amino-acid polypeptide reads, in one-letter code: Pycsar effector protein SaPycTM (158 aa).

3 consecutive transmembrane segments (helical) span residues 20 to 40, 53 to 73, and 136 to 156; these read FADA…NFNF, IFNF…AFAV, and VFII…FQII.

Its subcellular location is the cell membrane. Its function is as follows. Pycsar (pyrimidine cyclase system for antiphage resistance) provides immunity against bacteriophage. The pyrimidine cyclase (PycC) synthesizes cyclic nucleotides in response to infection; these serve as specific second messenger signals. The signals activate the adjacent effector, leading to bacterial cell death and abortive phage infection. A clade E Pycsar system. Functionally, the effector gene of a two-gene Pycsar system. Expression of this and adjacent SaPycC cytidylate cyclase (AC P0DV38) probably confers resistance to bacteriophage. The genes are probably only expressed in response to bacteriophage infection. Probably only responds to cCMP (produced by its cognate NTP cyclase), acts by impairing membrane integrity. The protein is Pycsar effector protein SaPycTM of Staphylococcus aureus.